We begin with the raw amino-acid sequence, 48 residues long: uncharacterized protein (48 aa).

It belongs to the ELIP/psbS family.

Its subcellular location is the plastid. The protein localises to the chloroplast. Possible role in chlorophyll and/or carotenoid binding. This is an uncharacterized protein from Pyropia yezoensis (Susabi-nori).